The primary structure comprises 66 residues: DNA gyrase inhibitor YacG (66 aa).

The Zn(2+) site is built by Cys9, Cys12, Cys28, and Cys32.

Belongs to the DNA gyrase inhibitor YacG family. In terms of assembly, interacts with GyrB. Zn(2+) serves as cofactor.

Inhibits all the catalytic activities of DNA gyrase by preventing its interaction with DNA. Acts by binding directly to the C-terminal domain of GyrB, which probably disrupts DNA binding by the gyrase. This chain is DNA gyrase inhibitor YacG, found in Pseudomonas aeruginosa (strain LESB58).